The primary structure comprises 396 residues: Transcription factor E2FC (396 aa).

The segment covering 34 to 48 has biased composition (polar residues); that stretch reads PRYSSLTPSSTNRPF. The disordered stretch occupies residues 34-57; it reads PRYSSLTPSSTNRPFSVSQSLPNS. Residues 155–220 mediate DNA binding; that stretch reads RYDSSLGLLT…TTKNHIRWKG (66 aa). Residues 226 to 268 are a coiled coil; sequence QKDLGDQISRLKSEVESMQSEESRLDDLIRERQEALRSLEEDD. A leucine-zipper region spans residues 236–264; that stretch reads LKSEVESMQSEESRLDDLIRERQEALRSL. The retinoblastoma protein binding stretch occupies residues 376–391; sequence DYWFESDAEVSLTDLW.

It belongs to the E2F/DP family. As to quaternary structure, heterodimer with DP proteins. Interacts preferentially with DPB, but also with DPA. No interaction with DPB when phosphorylated. Interacts with SKP2A, CDKA-1 and maize retinoblastoma-related protein RBR1. Component of a DREAM-like complex which modulates a variety of developmentally regulated genes and of the mitotic genes in proliferating and differentiated cells. Interacts with MYB3R3 at later stages of leaves development. In terms of processing, phosphorylated by cyclin-dependent kinase. Phosphorylation is necessary to target E2FC for proteolysis. In terms of tissue distribution, expressed in meristematic areas, vascular tissues, apical part of the roots, cotyledons, upper region of the hypocotyls, trichomes, young flower buds and pollen grains.

It is found in the cytoplasm. In terms of biological role, involved in transcriptional repression. May act by repressing E2F-regulated genes in mature differentiated cells, but is not an antagonist of E2FA. Restricts cell division and is involved in the coordination between cell proliferation and endoreduplication during development. May play a role during the transition from skotomorphogenesis to photomorphogenesis. Regulated by phosphorylation-dependent proteolysis via the protein-ubiquitin ligase SCF(SKP2A) complex. In Arabidopsis thaliana (Mouse-ear cress), this protein is Transcription factor E2FC (E2FC).